The chain runs to 181 residues: Avenin-like a6 (181 aa).

Positions 1-19 (MKNLFILALLAFTATSAVA) are cleaved as a signal peptide.

Belongs to the prolamin family. Contains 7 disulfide bonds.

Its function is as follows. Seed storage protein. Not integrated in the gluten polymer through disulfide bonds, unless incorporated by reduction and reoxidation during dough making. Increases dough strength and bread volume, but decreases dough stability when added into a base wheat flour. The sequence is that of Avenin-like a6 from Triticum aestivum (Wheat).